A 173-amino-acid polypeptide reads, in one-letter code: Bifunctional protein PyrR (173 aa).

A PRPP-binding motif is present at residues 93 to 105; that stretch reads VILVDDVLYTGRT.

The protein belongs to the purine/pyrimidine phosphoribosyltransferase family. PyrR subfamily. In terms of assembly, homodimer and homohexamer; in equilibrium.

The enzyme catalyses UMP + diphosphate = 5-phospho-alpha-D-ribose 1-diphosphate + uracil. Its function is as follows. Regulates transcriptional attenuation of the pyrimidine nucleotide (pyr) operon by binding in a uridine-dependent manner to specific sites on pyr mRNA. This disrupts an antiterminator hairpin in the RNA and favors formation of a downstream transcription terminator, leading to a reduced expression of downstream genes. Functionally, also displays a weak uracil phosphoribosyltransferase activity which is not physiologically significant. This Streptococcus uberis (strain ATCC BAA-854 / 0140J) protein is Bifunctional protein PyrR.